The following is a 95-amino-acid chain: uncharacterized protein (95 aa).

Residues 1–64 form a disordered region; that stretch reads MEIDDIFASK…PKGASGRKRT (64 aa). The span at 18–28 shows a compositional bias: basic and acidic residues; that stretch reads KSNDSKSEAKA. The segment covering 35–49 has biased composition (polar residues); the sequence is TKSTPSRPKPTNNQD.

This is an uncharacterized protein from Schizosaccharomyces pombe (strain 972 / ATCC 24843) (Fission yeast).